The sequence spans 820 residues: Probable protease Ga0182885_104520 (820 aa).

The protein belongs to the peptidase C25 family.

Probably a dedicated protease for substrate gasdermin bGSDM; cleaves the bGSDM precursor, releasing the pore-forming moiety, which integrates into the membrane and triggers cell death. Involved in defense against bacteriophages. Expression of bacterial gasdermin (bGSDM) and this neighboring protease is toxic in E.coli. This chain is Probable protease Ga0182885_104520, found in Desulfuromonadales bacterium.